The following is a 614-amino-acid chain: MAVENAINFREICSLLDISESYKCTINAFLDNVEKCTDKHYNDALNLLDTFFSNEVKSNSLVNDLIFCIINSNFDFLKVFKSNKLRLENLQIVYESAFNENKPFLKEFSAKDKINKEVKKNLYSTPAVTRFAPEPSGCLHIGHLKALLVNYNLAEKSNGTLLLRFDDTNPVKNYEKYEKEILRDLDTLGITGLKISHSSDYFELLVDEAVSLINKNLAYVDNTDQETMRIERFEGIESKMRNINNSESLKIFKELLQGRAPGYCLRAKIDMSNPNKSMRDPVIYRASDKMHGRCKLYKAFPTYDFVCPIVDSIEGVTVVCRANEYKDRNEQYKWFLENLELENKPEFNDFSKLNLEDTVLSKRKIDKLISDSLVTGWDDPRLATIQGIKRLGMHMTALKDYINLQGASNKTNVISWDKIWAMNKKVIDPLSPRFMAVEKINCVRVFITNFEGLKYTKNIPLNKKNTSLGSKDVLFSDTLLFSQEDGFVLKENEEFTLMNWGNAIVEKKVVENSIVTELYIKLHLEGDYKSTTNKISWVSESGAVTATGIEYGKLLVNEEFNINSKIDKQYYVESSITNLSTDMKHVQFERIGFFYCDSPCVFHLVPFTKQKRTY.

130-132 (RFA) lines the L-glutamate pocket. A 'HIGH' region motif is present at residues 135–144 (PSGCLHIGHL). Residue histidine 140 participates in ATP binding. Residues aspartate 166, 303–307 (YDFVC), and arginine 321 each bind L-glutamate. ATP contacts are provided by residues glutamate 324 and 359–363 (VLSKR). The 'KMSKS' region motif lies at 359 to 363 (VLSKR).

Belongs to the class-I aminoacyl-tRNA synthetase family. Glutamate--tRNA ligase type 2 subfamily.

It is found in the cytoplasm. It catalyses the reaction tRNA(Glu) + L-glutamate + ATP = L-glutamyl-tRNA(Glu) + AMP + diphosphate. This Vairimorpha ceranae (strain BRL01) (Microsporidian parasite) protein is Probable glutamate--tRNA ligase, cytoplasmic.